The primary structure comprises 250 residues: Small ribosomal subunit protein uS2 (250 aa).

Belongs to the universal ribosomal protein uS2 family.

This Polaromonas naphthalenivorans (strain CJ2) protein is Small ribosomal subunit protein uS2.